The primary structure comprises 116 residues: Non-specific lipid-transfer protein 1 (116 aa).

The signal sequence occupies residues 1–25; the sequence is MARAQLVLVALVAALLLAAPHAAVA. 4 cysteine pairs are disulfide-bonded: C28–C75, C38–C52, C53–C98, and C73–C112.

Belongs to the plant LTP family. In terms of tissue distribution, aleurone (external part) of the seeds.

In terms of biological role, plant non-specific lipid-transfer proteins transfer phospholipids as well as galactolipids across membranes. May play a role in wax or cutin deposition in the cell walls of expanding epidermal cells and certain secretory tissues. The sequence is that of Non-specific lipid-transfer protein 1 (LTP) from Oryza sativa subsp. indica (Rice).